The following is a 1026-amino-acid chain: Multidrug resistance protein MdtC (1026 aa).

11 helical membrane passes run 15–35 (ILIA…LPVA), 333–353 (EVEE…FLFL), 360–380 (LIPA…MYLC), 387–407 (LSLM…IVVL), 431–451 (VGFT…PLLL), 463–483 (FAVT…TLTP), 528–548 (LVGV…IAIP), 853–873 (LILI…LYES), 897–917 (LFNA…IGIV), 953–973 (PIMM…LSGG), and 984–1004 (ITIV…TPVV).

Belongs to the resistance-nodulation-cell division (RND) (TC 2.A.6) family. MdtC subfamily. Part of a tripartite efflux system composed of MdtA, MdtB and MdtC. MdtC forms a heteromultimer with MdtB.

It is found in the cell inner membrane. The chain is Multidrug resistance protein MdtC from Salmonella gallinarum (strain 287/91 / NCTC 13346).